Here is a 429-residue protein sequence, read N- to C-terminus: Adenylosuccinate synthetase (429 aa).

GTP is bound by residues 12–18 and 40–42; these read GDEGKGK and GHT. Catalysis depends on Asp13, which acts as the Proton acceptor. Positions 13 and 40 each coordinate Mg(2+). IMP contacts are provided by residues 13-16, 38-41, Thr129, Arg143, Gln223, Thr238, and Arg302; these read DEGK and NAGH. The active-site Proton donor is His41. Residue 298–304 coordinates substrate; sequence VVTGRKR. GTP-binding positions include Arg304, 330 to 332, and 412 to 414; these read KLD and STS.

Belongs to the adenylosuccinate synthetase family. As to quaternary structure, homodimer. It depends on Mg(2+) as a cofactor.

It localises to the cytoplasm. It carries out the reaction IMP + L-aspartate + GTP = N(6)-(1,2-dicarboxyethyl)-AMP + GDP + phosphate + 2 H(+). Its pathway is purine metabolism; AMP biosynthesis via de novo pathway; AMP from IMP: step 1/2. Plays an important role in the de novo pathway of purine nucleotide biosynthesis. Catalyzes the first committed step in the biosynthesis of AMP from IMP. In Brucella abortus (strain 2308), this protein is Adenylosuccinate synthetase.